The chain runs to 212 residues: Probable GTP-binding protein EngB (212 aa).

In terms of domain architecture, EngB-type G spans S38 to P210. GTP-binding positions include G46 to S53, G73 to Q77, D91 to G94, T158 to D161, and V189 to N191. Mg(2+) is bound by residues S53 and T75.

This sequence belongs to the TRAFAC class TrmE-Era-EngA-EngB-Septin-like GTPase superfamily. EngB GTPase family. It depends on Mg(2+) as a cofactor.

Functionally, necessary for normal cell division and for the maintenance of normal septation. The chain is Probable GTP-binding protein EngB from Rickettsia conorii (strain ATCC VR-613 / Malish 7).